Reading from the N-terminus, the 61-residue chain is Small ribosomal subunit protein uS14 (61 aa).

Cys-24, Cys-27, Cys-40, and Cys-43 together coordinate Zn(2+).

This sequence belongs to the universal ribosomal protein uS14 family. Zinc-binding uS14 subfamily. In terms of assembly, part of the 30S ribosomal subunit. Contacts proteins S3 and S10. Zn(2+) is required as a cofactor.

In terms of biological role, binds 16S rRNA, required for the assembly of 30S particles and may also be responsible for determining the conformation of the 16S rRNA at the A site. The sequence is that of Small ribosomal subunit protein uS14 from Streptococcus pyogenes serotype M49 (strain NZ131).